A 324-amino-acid chain; its full sequence is tRNA-cytidine(32) 2-sulfurtransferase (324 aa).

The interval 1 to 26 (MQDLIDSPTAARTPAEEKIRHEGNKL) is disordered. The span at 14–26 (PAEEKIRHEGNKL) shows a compositional bias: basic and acidic residues. A PP-loop motif motif is present at residues 55 to 60 (SGGKDS). Positions 130, 133, and 221 each coordinate [4Fe-4S] cluster. The interval 278–310 (RPDANGDTAFDPIDPEDPREDAGDACASSPADG) is disordered.

This sequence belongs to the TtcA family. As to quaternary structure, homodimer. Requires Mg(2+) as cofactor. [4Fe-4S] cluster is required as a cofactor.

The protein localises to the cytoplasm. It carries out the reaction cytidine(32) in tRNA + S-sulfanyl-L-cysteinyl-[cysteine desulfurase] + AH2 + ATP = 2-thiocytidine(32) in tRNA + L-cysteinyl-[cysteine desulfurase] + A + AMP + diphosphate + H(+). It functions in the pathway tRNA modification. In terms of biological role, catalyzes the ATP-dependent 2-thiolation of cytidine in position 32 of tRNA, to form 2-thiocytidine (s(2)C32). The sulfur atoms are provided by the cysteine/cysteine desulfurase (IscS) system. The protein is tRNA-cytidine(32) 2-sulfurtransferase of Bordetella petrii (strain ATCC BAA-461 / DSM 12804 / CCUG 43448).